We begin with the raw amino-acid sequence, 462 residues long: Proline--tRNA ligase (462 aa).

This sequence belongs to the class-II aminoacyl-tRNA synthetase family. ProS type 3 subfamily. Homodimer.

It is found in the cytoplasm. The catalysed reaction is tRNA(Pro) + L-proline + ATP = L-prolyl-tRNA(Pro) + AMP + diphosphate. Catalyzes the attachment of proline to tRNA(Pro) in a two-step reaction: proline is first activated by ATP to form Pro-AMP and then transferred to the acceptor end of tRNA(Pro). This Thermoplasma acidophilum (strain ATCC 25905 / DSM 1728 / JCM 9062 / NBRC 15155 / AMRC-C165) protein is Proline--tRNA ligase.